Here is a 132-residue protein sequence, read N- to C-terminus: Thioredoxin H4-2 (132 aa).

In terms of domain architecture, Thioredoxin spans 18-130 (DFKGGNVHVI…LEKKVQALAD (113 aa)). Active-site nucleophile residues include C56 and C59. A disulfide bond links C56 and C59.

This sequence belongs to the thioredoxin family. Plant H-type subfamily.

It is found in the cytoplasm. Functionally, probable thiol-disulfide oxidoreductase that may be involved in the redox regulation of a number of cytosolic enzymes. This Oryza sativa subsp. japonica (Rice) protein is Thioredoxin H4-2.